We begin with the raw amino-acid sequence, 391 residues long: Isocitrate dehydrogenase [NADP] (391 aa).

5 residues coordinate D-threo-isocitrate: Ser-102, Asn-104, Arg-108, Arg-118, and Arg-142. Asp-283 serves as a coordination point for Mg(2+).

This sequence belongs to the isocitrate and isopropylmalate dehydrogenases family. Homodimer. Mg(2+) is required as a cofactor. It depends on Mn(2+) as a cofactor.

The enzyme catalyses D-threo-isocitrate + NADP(+) = 2-oxoglutarate + CO2 + NADPH. Catalyzes the oxidative decarboxylation of isocitrate to 2-oxoglutarate and carbon dioxide with the concomitant reduction of NADP(+). The sequence is that of Isocitrate dehydrogenase [NADP] (icd) from Streptococcus salivarius.